Here is a 339-residue protein sequence, read N- to C-terminus: Large ribosomal subunit protein uL11m (339 aa).

The protein belongs to the universal ribosomal protein uL11 family.

It is found in the mitochondrion. In Acanthamoeba castellanii (Amoeba), this protein is Large ribosomal subunit protein uL11m (RPL11).